Reading from the N-terminus, the 342-residue chain is Foldase protein PrsA (342 aa).

Positions 1–22 (MVSVKKIVASALVGVLMFSAVG) are cleaved as a signal peptide. Residue C23 is the site of N-palmitoyl cysteine attachment. C23 is lipidated: S-diacylglycerol cysteine. A PpiC domain is found at 189 to 284 (DSGVLTKHLL…FGYHIIQAGA (96 aa)).

It belongs to the PrsA family.

It localises to the cell membrane. The enzyme catalyses [protein]-peptidylproline (omega=180) = [protein]-peptidylproline (omega=0). Functionally, plays a major role in protein secretion by helping the post-translocational extracellular folding of several secreted proteins. The protein is Foldase protein PrsA of Clostridium perfringens (strain 13 / Type A).